A 65-amino-acid chain; its full sequence is Large ribosomal subunit protein bL35 (65 aa).

2 stretches are compositionally biased toward basic residues: residues 1–15 and 26–44; these read MPKM…KRFT and QAFK…KRQL. Residues 1–65 form a disordered region; that stretch reads MPKMKTKKSA…KSVRAMMPYA (65 aa).

It belongs to the bacterial ribosomal protein bL35 family.

The polypeptide is Large ribosomal subunit protein bL35 (Ralstonia nicotianae (strain ATCC BAA-1114 / GMI1000) (Ralstonia solanacearum)).